The chain runs to 327 residues: Peroxidase 15 (327 aa).

The first 23 residues, 1–23 (MASFSPLLAMALAIFIFSSHSNA), serve as a signal peptide directing secretion. A Pyrrolidone carboxylic acid modification is found at Q24. 4 cysteine pairs are disulfide-bonded: C34–C115, C67–C72, C121–C323, and C200–C232. Residue N36 is glycosylated (N-linked (GlcNAc...) asparagine). H65 functions as the Proton acceptor in the catalytic mechanism. Ca(2+)-binding residues include D66, V69, G71, D73, and S75. N-linked (GlcNAc...) asparagine glycosylation is found at N81, N96, and N159. P163 contributes to the substrate binding site. 2 N-linked (GlcNAc...) asparagine glycosylation sites follow: N168 and N171. H193 contacts heme b. Residue T194 participates in Ca(2+) binding. N209 and N221 each carry an N-linked (GlcNAc...) asparagine glycan. Ca(2+) is bound by residues D245, T248, and D253. N287 and N291 each carry an N-linked (GlcNAc...) asparagine glycan.

This sequence belongs to the peroxidase family. Classical plant (class III) peroxidase subfamily. Requires Ca(2+) as cofactor. Heme b serves as cofactor.

The protein resides in the secreted. The catalysed reaction is 2 a phenolic donor + H2O2 = 2 a phenolic radical donor + 2 H2O. Removal of H(2)O(2), oxidation of toxic reductants, biosynthesis and degradation of lignin, suberization, auxin catabolism, response to environmental stresses such as wounding, pathogen attack and oxidative stress. These functions might be dependent on each isozyme/isoform in each plant tissue. The protein is Peroxidase 15 of Ipomoea batatas (Sweet potato).